The sequence spans 328 residues: Phenylalanine--tRNA ligase alpha subunit (328 aa).

It belongs to the class-II aminoacyl-tRNA synthetase family. Phe-tRNA synthetase alpha subunit type 1 subfamily. Tetramer of two alpha and two beta subunits. Mg(2+) serves as cofactor.

The protein localises to the cytoplasm. The enzyme catalyses tRNA(Phe) + L-phenylalanine + ATP = L-phenylalanyl-tRNA(Phe) + AMP + diphosphate + H(+). The polypeptide is Phenylalanine--tRNA ligase alpha subunit (Buchnera aphidicola subsp. Baizongia pistaciae (strain Bp)).